The following is a 156-amino-acid chain: SsrA-binding protein (156 aa).

The interval 131–156 is disordered; that stretch reads YDKRQTLREQQDKREALRVMRERNRG.

The protein belongs to the SmpB family.

Its subcellular location is the cytoplasm. Its function is as follows. Required for rescue of stalled ribosomes mediated by trans-translation. Binds to transfer-messenger RNA (tmRNA), required for stable association of tmRNA with ribosomes. tmRNA and SmpB together mimic tRNA shape, replacing the anticodon stem-loop with SmpB. tmRNA is encoded by the ssrA gene; the 2 termini fold to resemble tRNA(Ala) and it encodes a 'tag peptide', a short internal open reading frame. During trans-translation Ala-aminoacylated tmRNA acts like a tRNA, entering the A-site of stalled ribosomes, displacing the stalled mRNA. The ribosome then switches to translate the ORF on the tmRNA; the nascent peptide is terminated with the 'tag peptide' encoded by the tmRNA and targeted for degradation. The ribosome is freed to recommence translation, which seems to be the essential function of trans-translation. The sequence is that of SsrA-binding protein from Arthrobacter sp. (strain FB24).